The sequence spans 71 residues: UPF0434 protein Csal_1588 (71 aa).

It belongs to the UPF0434 family.

The chain is UPF0434 protein Csal_1588 from Chromohalobacter salexigens (strain ATCC BAA-138 / DSM 3043 / CIP 106854 / NCIMB 13768 / 1H11).